Reading from the N-terminus, the 474-residue chain is Siroheme synthase (474 aa).

The interval 1–203 (MDYLPIFLKL…GRAEDAERVL (203 aa)) is precorrin-2 dehydrogenase /sirohydrochlorin ferrochelatase. Residues 22–23 (EV) and 43–44 (AS) contribute to the NAD(+) site. The uroporphyrinogen-III C-methyltransferase stretch occupies residues 219 to 474 (GSVALVGAGP…QETEGRSGNG (256 aa)). P228 lines the S-adenosyl-L-methionine pocket. Catalysis depends on D251, which acts as the Proton acceptor. K273 acts as the Proton donor in catalysis. Residues 304-306 (GGD), I309, 334-335 (TA), M387, and G416 contribute to the S-adenosyl-L-methionine site.

In the N-terminal section; belongs to the precorrin-2 dehydrogenase / sirohydrochlorin ferrochelatase family. This sequence in the C-terminal section; belongs to the precorrin methyltransferase family.

The enzyme catalyses uroporphyrinogen III + 2 S-adenosyl-L-methionine = precorrin-2 + 2 S-adenosyl-L-homocysteine + H(+). The catalysed reaction is precorrin-2 + NAD(+) = sirohydrochlorin + NADH + 2 H(+). It carries out the reaction siroheme + 2 H(+) = sirohydrochlorin + Fe(2+). It participates in cofactor biosynthesis; adenosylcobalamin biosynthesis; precorrin-2 from uroporphyrinogen III: step 1/1. It functions in the pathway cofactor biosynthesis; adenosylcobalamin biosynthesis; sirohydrochlorin from precorrin-2: step 1/1. The protein operates within porphyrin-containing compound metabolism; siroheme biosynthesis; precorrin-2 from uroporphyrinogen III: step 1/1. Its pathway is porphyrin-containing compound metabolism; siroheme biosynthesis; siroheme from sirohydrochlorin: step 1/1. It participates in porphyrin-containing compound metabolism; siroheme biosynthesis; sirohydrochlorin from precorrin-2: step 1/1. Functionally, multifunctional enzyme that catalyzes the SAM-dependent methylations of uroporphyrinogen III at position C-2 and C-7 to form precorrin-2 via precorrin-1. Then it catalyzes the NAD-dependent ring dehydrogenation of precorrin-2 to yield sirohydrochlorin. Finally, it catalyzes the ferrochelation of sirohydrochlorin to yield siroheme. This is Siroheme synthase from Methylococcus capsulatus (strain ATCC 33009 / NCIMB 11132 / Bath).